The sequence spans 293 residues: Homoserine kinase (293 aa).

Residue 83–93 (RPKSGLGSSGA) participates in ATP binding.

Belongs to the GHMP kinase family. Homoserine kinase subfamily.

It localises to the cytoplasm. The enzyme catalyses L-homoserine + ATP = O-phospho-L-homoserine + ADP + H(+). It participates in amino-acid biosynthesis; L-threonine biosynthesis; L-threonine from L-aspartate: step 4/5. In terms of biological role, catalyzes the ATP-dependent phosphorylation of L-homoserine to L-homoserine phosphate. The sequence is that of Homoserine kinase from Pyrococcus horikoshii (strain ATCC 700860 / DSM 12428 / JCM 9974 / NBRC 100139 / OT-3).